A 191-amino-acid chain; its full sequence is UPF0302 protein SA1295 (191 aa).

This sequence belongs to the UPF0302 family.

The sequence is that of UPF0302 protein SA1295 from Staphylococcus aureus (strain N315).